A 518-amino-acid chain; its full sequence is Ribonuclease Y (518 aa).

A helical transmembrane segment spans residues Gly2–Val22. Positions Thr208–Leu271 constitute a KH domain. The region spanning Val334–Ala427 is the HD domain.

It belongs to the RNase Y family.

The protein localises to the cell membrane. Endoribonuclease that initiates mRNA decay. This is Ribonuclease Y from Geobacillus thermodenitrificans (strain NG80-2).